A 414-amino-acid chain; its full sequence is Ena/VASP-like protein (414 aa).

The 112-residue stretch at 1–112 folds into the WH1 domain; sequence MSEQSICQAR…NAMLFALNIM (112 aa). Ser-130 carries the phosphoserine modification. Residues 157-369 form a disordered region; sequence ATGPILPPGH…SRVKPAGSVN (213 aa). Over residues 179-204 the composition is skewed to pro residues; it reads GPPPPPPPPVPPPPTGSTPPPPPPLP. Over residues 217-228 the composition is skewed to low complexity; it reads SASGLAAALAGA. The segment at 220-240 is EVH2 block A; it reads GLAAALAGAKLRRVQRPEDAS. The segment at 220-411 is EVH2; the sequence is GLAAALAGAK…DAIRQELSGI (192 aa). A KLKR motif is present at residues 229–232; it reads KLRR. Residues 240–251 show a composition bias toward low complexity; it reads SGGSSPSGTSKS. A phosphoserine mark is found at Ser-244 and Ser-257. The tract at residues 263-280 is EVH2 block B; that stretch reads GGLMEEMNKLLAKRRKAA. A compositionally biased stretch (polar residues) spans 297 to 318; that stretch reads EDPSTSPSPGTRATSQPPNSSE. A phosphoserine mark is found at Ser-302, Ser-304, Ser-327, Ser-329, Ser-339, Ser-347, Ser-352, and Ser-367. Positions 319 to 329 are enriched in basic and acidic residues; the sequence is AGRKPWERSNS. The segment at 340–360 is required for interaction with ZDHHC17; sequence RTPSVAKSPEAKSPLQSQPHS. The interval 377-411 is EVH2 block C; sequence DLDRMKQEILEEVVRELHKVKEEIIDAIRQELSGI.

Belongs to the Ena/VASP family. Homotetramer. Binds to the SH3 domains of ABL1, LYN and SRC. Also binds to profilin, with preference for isoform IIa of PFN2, and the WW domain of APBB1/FE65. Binds to SEMA6A. Interacts, via the Pro-rich region, with the C-terminal SH3 domain of DNMBP. Interacts with RAPH1. Binds, via the EVH1 domain, the Pro-rich domain of Listeria monocytogenes actA. Binds, via the EVH1 domain, the Pro-rich domain of ZYX. Interacts with FYB1. Interacts with ZDHHC17. Phosphorylated by PKA; phosphorylation abolishes binding to SH3 domains of ABL and SRC. In terms of tissue distribution, highest expression in thymus and spleen (at protein level). Low levels in placenta, ovary, testis, fat and lung (at protein level). Isoform 1 and isoform 2 are expressed in cortical neurons and glial cells.

Its subcellular location is the cytoplasm. The protein resides in the cytoskeleton. It is found in the stress fiber. It localises to the cell projection. The protein localises to the lamellipodium. Functionally, ena/VASP proteins are actin-associated proteins involved in a range of processes dependent on cytoskeleton remodeling and cell polarity such as axon guidance and lamellipodial and filopodial dynamics in migrating cells. EVL enhances actin nucleation and polymerization. The protein is Ena/VASP-like protein (Evl) of Mus musculus (Mouse).